The sequence spans 117 residues: B-box domain protein 30 (117 aa).

The B box-type; atypical zinc finger occupies 27–73 (KAPVSCELCGENATVYCEADAAFLCRKCDRWVHSANFLARRHLRRVI). Zn(2+)-binding residues include C32, C35, C54, and H59. A PFVFL motif is present at residues 113–117 (PFVFL).

In terms of assembly, interacts with CO (via B-box) and with TPL (via PFVFL motif). As to expression, highly expressed in shoot apical meristems and in vascular tissues of leaves. Also detected in petioles.

It localises to the nucleus. Functionally, developmental regulator acting by forming heterodimeric complexes, that sequester CO and CO-like (COL) proteins into non-functional complexes. Engages CO and the transcriptional repressor TPL in a tripartite complex. Involved in the CO-mediated long-day flowering-promotion pathway. This chain is B-box domain protein 30, found in Arabidopsis thaliana (Mouse-ear cress).